The primary structure comprises 1461 residues: MKSGLFSMNDIFFLVNSIFKYFLILLNGSHLLKLLYSSKENIHIIEGLLCIITGVILKLSLIYIYCTYFMNIYIIKDYRRKNVLNIFNMNNNYKRNGNVIESDDFEYRKLIKKFFFKKVYYSIKKKHKRIELYMLKIYNSNFNYYFCNIRDMCYTIIWYISLYYWRRDTYNMIWGFNKIPTYIYNMLLILLSTSYIDLVMVIISYNKSKYYLMKSKLLIDIFFSAPCTYLFSKFIFVFEHQIDIYFMMGFLRNIKIFLNVSYVRIEHNSILTNTEIKIIRIVLGVLLLCNAFASTIYTIQAIHPYNLDNENFNYFLNSYLDYFYFSIISISTVGYGDIFPINKLSKVVCIIFIFWTFIWVPIQFNDLIISIFSKKKTYGKISMNNQKFILLIGDVEPQQLNVFLFESVAQGNKLKFHLLTTYPINIYDEQIKIADHFCISLYIKNFDLNEKENINLLYSINAQNAYYLFLFSNKFHNGHYNIDTKSFTRLLILKKFLHGKKNAVIELRSNCVSNIVRSIGCENFIIVNLKHSLIVKNIKYPGFITLILNLFTAYNYDISSYNFNDIASYPSLKYIGEFNRGSRTKIFSFIVHKNMVGLIFDKLFYKLYESLGIILVGIETNTTNYYINNKKHKNKNSYVDDNFTTMRKNNMKNKKKKSFKFIYLHLLKKYGHTNHYTQKKKKKKYDNIINHHGSKSKMEYSTQLRHNNKTIKIYDEYNTIETYQNYLNYETINNSRINIYNSDEKKKKYNDVSPTNNILTNYKNGKLHIEKRDDFDNNNNNNNNNIVKSRKKGRENKNDEIINVCININSDIKKKYNNNNNNNNNNDNDNNNIINDHDNYNIYNNLNSNLKCRCLPNTKKNKAQNVNNVTNNKDNDVSVKRIKTHLQDDNTIDNKKELKCYLNLLGKNYAIRDSDKCVVIANSRKVIKYLSKAKSLFWIFEIKSKKKDNISYDLKSVIKTKQTFNKYFTTNIKKKLPTTSIQNNVYVNKNAHIIAMNYHDLFNTYRISRIFTKNNYNYKRKNSRKKHLFRNLNGEFNETKLYHHCNNTHNIKTTDKKNMEKLDKLYFSTKLNSKSNTNIHIHNNNNNNNNNNEHYDDEIKTYYFNLTEKNSHLLLNYKKQLKKKNYINTCYSVNKSDESINKIKNMNSDNNNINSNNINSNINNNNNNNTKLNHTLKNRITFSYMEACEKYFPTENRNNKLLLIINCTCNIIQLIKMFNNKYKYNVIILTDEIPTMNIMDLFKYNVVFIKCKILDDYNLINSGLMNAEYILILPTEAKNINEINEIDMNTIIVTRKITHLLKKKKRTYYINNIITELINPSNVIFLEENKMIKLKDKKSSYDDFFPYVNSSQFYSSNIICETMLYNFMTHHKSFTDFSVCTNTLECLIKFLRIIYICDLSKYYDFSFKKIKTFRDLFYFLSKKNIITIGLYRKGDKKVPFYIYTKPNENCLLRFDDIVYIL.

A run of 6 helical transmembrane segments spans residues 44–64, 142–162, 183–203, 218–238, 242–262, and 281–301; these read IIEGLLCIITGVILKLSLIYI, FNYYFCNIRDMCYTIIWYISL, IYNMLLILLSTSYIDLVMVII, LIDIFFSAPCTYLFSKFIFVF, IDIYFMMGFLRNIKIFLNVSY, and IVLGVLLLCNAFASTIYTIQA. An intramembrane region (pore-forming) is located at residues 322 to 340; sequence YFYFSIISISTVGYGDIFP. A helical transmembrane segment spans residues 349–369; that stretch reads CIIFIFWTFIWVPIQFNDLII. The segment at 771–794 is disordered; that stretch reads KRDDFDNNNNNNNNNIVKSRKKGR.

In terms of assembly, may form oligomers or interact with other proteins.

Its subcellular location is the membrane. Its function is as follows. Contributes to transmembrane potassium transport. In Plasmodium falciparum (isolate 3D7), this protein is Potassium channel K2.